A 172-amino-acid chain; its full sequence is Diphosphoinositol polyphosphate phosphohydrolase 1 (172 aa).

At M1 the chain carries N-acetylmethionine. Substrate is bound by residues R10, 18-20 (KKR), and 39-41 (SSR). The 128-residue stretch at 17–144 (YKKRAACLCF…VQASYFETLR (128 aa)) folds into the Nudix hydrolase domain. The Mg(2+) site is built by G50 and E66. A Nudix box motif is present at residues 51-72 (GGMEPEEEPGTAAVREVCEEAG). Residue E69 is the Proton acceptor of the active site. E70 contributes to the Mg(2+) binding site. Substrate is bound by residues 89 to 91 (RKH), R115, and K133.

This sequence belongs to the Nudix hydrolase family. DIPP subfamily. In terms of assembly, monomer. Mg(2+) is required as a cofactor. It depends on Mn(2+) as a cofactor. Requires Zn(2+) as cofactor.

Its subcellular location is the cytoplasm. The protein resides in the nucleus. It carries out the reaction diphospho-myo-inositol polyphosphate + H2O = myo-inositol polyphosphate + phosphate.. The enzyme catalyses 5-diphospho-1D-myo-inositol 1,2,3,4,6-pentakisphosphate + H2O = 1D-myo-inositol hexakisphosphate + phosphate + H(+). It catalyses the reaction 3,5-bis(diphospho)-1D-myo-inositol 1,2,4,6-tetrakisphosphate + H2O = 3-diphospho-1D-myo-inositol 1,2,4,5,6-pentakisphosphate + phosphate + 2 H(+). The catalysed reaction is [phosphate](n+1) + n H2O = (n+1) phosphate + n H(+). It carries out the reaction P(1),P(5)-bis(5'-adenosyl) pentaphosphate + H2O = ADP + ATP + 2 H(+). The enzyme catalyses P(1),P(6)-bis(5'-adenosyl) hexaphosphate + H2O = 2 ATP + 2 H(+). It catalyses the reaction P(1),P(4)-bis(5'-adenosyl) tetraphosphate + H2O = AMP + ATP + 2 H(+). The catalysed reaction is a 5'-end (N(7)-methyl 5'-triphosphoguanosine)-ribonucleoside in mRNA + H2O = N(7)-methyl-GMP + a 5'-end diphospho-ribonucleoside in mRNA + 2 H(+). It carries out the reaction a 5'-end (N(7)-methyl 5'-triphosphoguanosine)-ribonucleoside in mRNA + H2O = N(7)-methyl-GDP + a 5'-end phospho-ribonucleoside in mRNA + 2 H(+). In terms of biological role, cleaves a beta-phosphate from the diphosphate groups in PP-InsP5 (diphosphoinositol pentakisphosphate) and [PP]2-InsP4 (bisdiphosphoinositol tetrakisphosphate), suggesting that it may play a role in signal transduction. InsP6 (inositol hexakisphosphate) is not a substrate. Also able to catalyze the hydrolysis of dinucleoside oligophosphates, with diadenosine 5',5'''-P1,P6-hexaphosphate (Ap6A) and diadenosine 5',5'''- P1,P5-pentaphosphate (Ap5A) being the preferred substrates. The major reaction products are ADP and p4a from Ap6A and ADP and ATP from Ap5A. Also able to hydrolyze 5- phosphoribose 1-diphosphate. Acts as a decapping enzyme that can hydrolyze both monomethylated and unmethylated capped RNAs. Hydrolyzes monomethylated capped RNA after both the alpha- and beta-phosphates generating m7GMP + ppRNA and m7GDP + pRNA. Modulates the stability of a subset of mRNAs implicated in cell motility. Divalent cations zinc, magnesium and manganese determine its substrate specificity. Exhibits diphosphoinositol polyphosphate phosphohydrolase in the presence of magnesium ions, diadenosine hexaphosphate hydrolase activity in the presence of manganese ions and endopolyphosphatase activity in the presence of zinc ions. Plays an important role in limiting DNA damage and maintaining cell survival upon oxidative stress via its endopolyphosphatase activity. In Bos taurus (Bovine), this protein is Diphosphoinositol polyphosphate phosphohydrolase 1.